Consider the following 455-residue polypeptide: MLDIKLIRENPELVKNDLKKRGELEKIKWIDEILKLDAEWRAKLKEINKLRHERNKIAIEIGKRRKKGEPVEELLAKSKEIVKRIESLEKEVEELKKKIDYYLWRLPNITHPSVPIGESEEDNVPIRFWGKARVWEGHLERFLEQSQGKMEYEVLEWRPKLHVDLLEILGGADFARAAKVSGSRFYYLLNEIVILDLALIRFALDELIKKGFTPVIPPYMVRRFVEEGSTTFEDFEDVIYKVEGEDLYLIPTAEHPLAGMHANEILDGKDLPLLYVGISPCFRKEAGTAGKDTKGIFRVHQFHKVEQFVYSRPEESWEWHERIIRNAEELFQKLEIPYRVVNICTGDLGYVAAKKYDIEAWMPGQGRFREVVSASNCTDWQARRLNIRFRDRTDEKPRYVHTLNSTAIATSRAIVAILENHQEEDGTVKIPKVLWKYTGFKEIVPVEKKERCCSS.

252-254 contributes to the L-serine binding site; the sequence is TAE. ATP contacts are provided by residues 283–285 and Val299; that span reads RKE. An L-serine-binding site is contributed by Glu306. 370-373 provides a ligand contact to ATP; sequence EVVS. An L-serine-binding site is contributed by Thr406.

This sequence belongs to the class-II aminoacyl-tRNA synthetase family. Type-1 seryl-tRNA synthetase subfamily. As to quaternary structure, homodimer. The tRNA molecule binds across the dimer.

Its subcellular location is the cytoplasm. The catalysed reaction is tRNA(Ser) + L-serine + ATP = L-seryl-tRNA(Ser) + AMP + diphosphate + H(+). It catalyses the reaction tRNA(Sec) + L-serine + ATP = L-seryl-tRNA(Sec) + AMP + diphosphate + H(+). The protein operates within aminoacyl-tRNA biosynthesis; selenocysteinyl-tRNA(Sec) biosynthesis; L-seryl-tRNA(Sec) from L-serine and tRNA(Sec): step 1/1. Catalyzes the attachment of serine to tRNA(Ser). Is also able to aminoacylate tRNA(Sec) with serine, to form the misacylated tRNA L-seryl-tRNA(Sec), which will be further converted into selenocysteinyl-tRNA(Sec). This chain is Serine--tRNA ligase, found in Pyrococcus abyssi (strain GE5 / Orsay).